The primary structure comprises 530 residues: Transcription factor SPT20 homolog (530 aa).

Ser-296 is subject to Phosphoserine. Residues 419–530 (CPVKMSHSSS…PASSSQRHES (112 aa)) are disordered. Low complexity-rich tracts occupy residues 424-436 (SHSS…LNSG) and 466-475 (SSSGNSSSGN). Thr-490 carries the post-translational modification Phosphothreonine. Low complexity predominate over residues 514–530 (LSPAALSPASSSQRHES). Phosphoserine occurs at positions 515 and 520.

This sequence belongs to the SPT20 family. In terms of assembly, interacts with ATG9A. Interacts with MAPK14.

Functionally, required for MAP kinase p38 (MAPK11, MAPK12, MAPK13 and/or MAPK14) activation during gastrulation. Required for down-regulation of E-cadherin during gastrulation by regulating E-cadherin protein level downstream from NCK-interacting kinase (NIK) and independently of the regulation of transcription by FGF signaling and Snail. Required for starvation-induced ATG9A trafficking during autophagy. The protein is Transcription factor SPT20 homolog (Supt20h) of Rattus norvegicus (Rat).